The sequence spans 234 residues: Adenosine 5'-phosphosulfate reductase (234 aa).

[4Fe-4S] cluster contacts are provided by Cys120, Cys121, Cys203, and Cys206. The active-site Nucleophile; cysteine thiosulfonate intermediate is Cys229.

It belongs to the PAPS reductase family. CysH subfamily. Requires [4Fe-4S] cluster as cofactor.

The protein localises to the cytoplasm. It catalyses the reaction [thioredoxin]-disulfide + sulfite + AMP + 2 H(+) = adenosine 5'-phosphosulfate + [thioredoxin]-dithiol. Its pathway is sulfur metabolism; hydrogen sulfide biosynthesis; sulfite from sulfate. In terms of biological role, catalyzes the formation of sulfite from adenosine 5'-phosphosulfate (APS) using thioredoxin as an electron donor. This chain is Adenosine 5'-phosphosulfate reductase, found in Bacillus thuringiensis subsp. konkukian (strain 97-27).